The primary structure comprises 189 residues: MTKPLILASQSPRRKELLDLLQLPYSIIVSEVEEKLNRNFSPEENVQWLAKQKAKAVADLHPHAIVIGADTMVCLDGECLGKPQDQEEAASMLRRLSGRSHSVITAVSIQAENHSETFYDKTEVAFWSLSEEEIWTYIETKEPMDKAGAYGIQGRGALFVKKIDGDYYSVMGLPISKTMRALRHFDIRA.

D70 serves as the catalytic Proton acceptor. C74 and C79 are joined by a disulfide.

It belongs to the Maf family. YhdE subfamily. In terms of assembly, homodimer. Requires a divalent metal cation as cofactor.

It is found in the cytoplasm. The enzyme catalyses dTTP + H2O = dTMP + diphosphate + H(+). It carries out the reaction UTP + H2O = UMP + diphosphate + H(+). It catalyses the reaction CTP + H2O = CMP + diphosphate + H(+). The catalysed reaction is psi-UTP + H2O = psi-UMP + diphosphate + H(+). The enzyme catalyses 5-methyl-CTP + H2O = 5-methyl-CMP + diphosphate + H(+). It carries out the reaction 5-methyl-UTP + H2O = 5-methyl-UMP + diphosphate + H(+). Functionally, nucleoside triphosphate pyrophosphatase that hydrolyzes dTTP and UTP. Can also hydrolyze CTP and the modified nucleotides pseudo-UTP, 5-methyl-CTP (m(5)CTP) and 5-methyl-UTP (m(5)UTP). May have a dual role in cell division arrest and in preventing the incorporation of modified nucleotides into cellular nucleic acids. This is dTTP/UTP pyrophosphatase from Bacillus subtilis (strain 168).